A 320-amino-acid chain; its full sequence is Cytochrome f (320 aa).

The first 35 residues, 1 to 35, serve as a signal peptide directing secretion; it reads MQNRNTFSWVKEEMTRFISVSIMIYVITRTSISNA. The heme site is built by Tyr36, Cys56, Cys59, and His60. A helical transmembrane segment spans residues 286–306; the sequence is VQGLLFFLASVILAQIFLVLK.

Belongs to the cytochrome f family. As to quaternary structure, the 4 large subunits of the cytochrome b6-f complex are cytochrome b6, subunit IV (17 kDa polypeptide, petD), cytochrome f and the Rieske protein, while the 4 small subunits are PetG, PetL, PetM and PetN. The complex functions as a dimer. Requires heme as cofactor.

It is found in the plastid. The protein localises to the chloroplast thylakoid membrane. Functionally, component of the cytochrome b6-f complex, which mediates electron transfer between photosystem II (PSII) and photosystem I (PSI), cyclic electron flow around PSI, and state transitions. The polypeptide is Cytochrome f (Calycanthus floridus var. glaucus (Eastern sweetshrub)).